Consider the following 816-residue polypeptide: Phosphatidylinositol 4-kinase beta (816 aa).

Disordered regions lie at residues methionine 1–leucine 29, glutamate 99–glutamine 121, and arginine 250–serine 318. An N-acetylglycine modification is found at glycine 2. The interval glycine 2 to isoleucine 68 is interaction with ACBD3. A compositionally biased stretch (low complexity) spans threonine 10–leucine 29. One can recognise a PIK helical domain in the interval leucine 61–serine 242. Phosphoserine is present on serine 258. Threonine 263 carries the post-translational modification Phosphothreonine. A phosphoserine mark is found at serine 266, serine 275, serine 277, serine 284, and serine 294. 2 stretches are compositionally biased toward polar residues: residues aspartate 278–lysine 297 and serine 306–serine 318. At serine 428 the chain carries Phosphoserine. Threonine 438 is subject to Phosphothreonine. Serine 511 bears the Phosphoserine mark. A phosphothreonine mark is found at threonine 517 and threonine 519. A PI3K/PI4K catalytic domain is found at glutamate 535–threonine 801. A G-loop region spans residues valine 541 to glycine 547. The tract at residues glutamine 668–asparagine 676 is catalytic loop. The tract at residues histidine 687–threonine 711 is activation loop.

The protein belongs to the PI3/PI4-kinase family. Type III PI4K subfamily. Interacts with ARF1 and ARF3 in the Golgi complex, but not with ARF4, ARF5 or ARF6. Interacts with NCS1/FREQ in a calcium-independent manner. Interacts with CALN1/CABP8 and CALN2/CABP7; in a calcium-dependent manner; this interaction competes with NCS1/FREQ binding. Interacts with ACBD3. Interacts with ARMH3, YWHAB, YWHAE, YWHAG, YWHAH, YWHAQ, YWHAZ and SFN. Interacts with GGA2 (via VHS domain); the interaction is important for PI4KB location at the Golgi apparatus membrane. Interacts with ATG9A. The cofactor is Mg(2+). Mn(2+) serves as cofactor. In terms of tissue distribution, strongly expressed in brain, kidney, lung, small intestine, uterus and adrenal gland. Weaker expression in liver, heart, skeletal muscle, thymus and testis. Not detected in spleen.

The protein resides in the golgi apparatus. The protein localises to the endomembrane system. Its subcellular location is the mitochondrion outer membrane. It is found in the rough endoplasmic reticulum membrane. It localises to the golgi apparatus membrane. It catalyses the reaction a 1,2-diacyl-sn-glycero-3-phospho-(1D-myo-inositol) + ATP = a 1,2-diacyl-sn-glycero-3-phospho-(1D-myo-inositol 4-phosphate) + ADP + H(+). With respect to regulation, inhibited by wortmannin. Increased kinase activity upon interaction with NCS1/FREQ. Its function is as follows. Phosphorylates phosphatidylinositol (PI) in the first committed step in the production of the second messenger inositol-1,4,5,-trisphosphate (PIP). May regulate Golgi disintegration/reorganization during mitosis, possibly via its phosphorylation. Involved in Golgi-to-plasma membrane trafficking. May play an important role in the inner ear development. The sequence is that of Phosphatidylinositol 4-kinase beta (Pi4kb) from Rattus norvegicus (Rat).